Reading from the N-terminus, the 226-residue chain is ATP-dependent dethiobiotin synthetase BioD (226 aa).

Position 12 to 17 (12 to 17) interacts with ATP; the sequence is GVGKTV. Thr-16 is a Mg(2+) binding site. The active site involves Lys-37. Thr-41 contributes to the substrate binding site. ATP contacts are provided by residues Asp-49, 108 to 111, 169 to 170, and 197 to 199; these read EGAG, GS, and PAG. Asp-49 and Glu-108 together coordinate Mg(2+).

This sequence belongs to the dethiobiotin synthetase family. Homodimer. The cofactor is Mg(2+).

The protein localises to the cytoplasm. The catalysed reaction is (7R,8S)-7,8-diammoniononanoate + CO2 + ATP = (4R,5S)-dethiobiotin + ADP + phosphate + 3 H(+). The protein operates within cofactor biosynthesis; biotin biosynthesis; biotin from 7,8-diaminononanoate: step 1/2. Functionally, catalyzes a mechanistically unusual reaction, the ATP-dependent insertion of CO2 between the N7 and N8 nitrogen atoms of 7,8-diaminopelargonic acid (DAPA, also called 7,8-diammoniononanoate) to form a ureido ring. The polypeptide is ATP-dependent dethiobiotin synthetase BioD (Mycobacterium tuberculosis (strain ATCC 25177 / H37Ra)).